A 261-amino-acid polypeptide reads, in one-letter code: 5'-nucleotidase SurE (261 aa).

Residues D8, D9, S39, and N91 each contribute to the a divalent metal cation site.

This sequence belongs to the SurE nucleotidase family. It depends on a divalent metal cation as a cofactor.

The protein resides in the cytoplasm. The catalysed reaction is a ribonucleoside 5'-phosphate + H2O = a ribonucleoside + phosphate. In terms of biological role, nucleotidase that shows phosphatase activity on nucleoside 5'-monophosphates. This is 5'-nucleotidase SurE from Polaromonas sp. (strain JS666 / ATCC BAA-500).